The chain runs to 35 residues: MEALVYTFLLVSTLGIIFFAIFFREPPKVPTKKTK.

Residues 3 to 23 form a helical membrane-spanning segment; sequence ALVYTFLLVSTLGIIFFAIFF.

It belongs to the PsbT family. In terms of assembly, PSII is composed of 1 copy each of membrane proteins PsbA, PsbB, PsbC, PsbD, PsbE, PsbF, PsbH, PsbI, PsbJ, PsbK, PsbL, PsbM, PsbT, PsbY, PsbZ, Psb30/Ycf12, at least 3 peripheral proteins of the oxygen-evolving complex and a large number of cofactors. It forms dimeric complexes.

Its subcellular location is the plastid. It localises to the chloroplast thylakoid membrane. Functionally, found at the monomer-monomer interface of the photosystem II (PS II) dimer, plays a role in assembly and dimerization of PSII. PSII is a light-driven water plastoquinone oxidoreductase, using light energy to abstract electrons from H(2)O, generating a proton gradient subsequently used for ATP formation. This Citrus sinensis (Sweet orange) protein is Photosystem II reaction center protein T.